A 142-amino-acid polypeptide reads, in one-letter code: MKTFVAKPETVKRDWYVVDATGKTLGRLATELARRLRGKHKAEYTPHVDTGDYIIVINAEKVAVTGNKESDKLYHWHTGYVGGIKQATFKEMIARRPEAVIEIAVKGMLPKGPLGRAMYRKLKVYAGSEHNHAAQQPQVLDI.

Belongs to the universal ribosomal protein uL13 family. In terms of assembly, part of the 50S ribosomal subunit.

Functionally, this protein is one of the early assembly proteins of the 50S ribosomal subunit, although it is not seen to bind rRNA by itself. It is important during the early stages of 50S assembly. The sequence is that of Large ribosomal subunit protein uL13 from Pasteurella multocida (strain Pm70).